Consider the following 535-residue polypeptide: MRLAFWLYEGTALHGVSRVTNSMKGVHTVYHAPQGDDYITATYTMLERTPEFPKLSISVVRGQDLARGTSRLPGTVEQVAKHYNPELIVVAPSCSTALLQEDLGQMARASGIDENKIMVYAVNPFRVAETEAAEGLFTELVKRFAAEQPKTEKPSVNLLGFTSLGFHLRSNLTSLRRMLKTLGIEVNVVAPWGAGIDDLKKLPAAWVNIAPFRELGCQAAGYLKENFGMPSITEAPLGVNATLRWLRAIIAEVNKIGAEKGMAPIEMPEMRDFSLDGQSAPSGVPWFARTADMESFSNKRAFVFGDATQVVGVTKFLKDELGMKIIGAGTYLPKQADWVREQLEGYLPGELMVTDKFQEVSAFIEEEMPELVCGTQMERHSCRKLDVPCMVISTPTHIENHLLGYYPFFGFDGADVMADRVYTSAKLGLEKHLIDFFGDAGLEYEEEEPEVFTEPAMSGNGTVTSSAEAPAEAAVATATATGELSWTAEAEKMLGKVPFFVRKKVRKNTDNYAREIGEQVITADVFRKAKEHLGG.

Asp-36 contributes to the [4Fe-4S] cluster binding site. Asp-292 serves as the catalytic Proton donor. 428 to 429 (GL) contributes to the substrate binding site.

Belongs to the ChlB/BchB/BchZ family. In terms of assembly, protochlorophyllide reductase is composed of three subunits; BchL, BchN and BchB. Forms a heterotetramer of two BchB and two BchN subunits. It depends on [4Fe-4S] cluster as a cofactor.

It catalyses the reaction chlorophyllide a + oxidized 2[4Fe-4S]-[ferredoxin] + 2 ADP + 2 phosphate = protochlorophyllide a + reduced 2[4Fe-4S]-[ferredoxin] + 2 ATP + 2 H2O. It functions in the pathway porphyrin-containing compound metabolism; bacteriochlorophyll biosynthesis (light-independent). Its function is as follows. Component of the dark-operative protochlorophyllide reductase (DPOR) that uses Mg-ATP and reduced ferredoxin to reduce ring D of protochlorophyllide (Pchlide) to form chlorophyllide a (Chlide). This reaction is light-independent. The NB-protein (BchN-BchB) is the catalytic component of the complex. The polypeptide is Light-independent protochlorophyllide reductase subunit B (Chlorobaculum parvum (strain DSM 263 / NCIMB 8327) (Chlorobium vibrioforme subsp. thiosulfatophilum)).